The sequence spans 205 residues: Holliday junction branch migration complex subunit RuvA (205 aa).

Residues 1–64 (MIGKLKGILE…EEAIRLFGFV (64 aa)) are domain I. The domain II stretch occupies residues 65 to 143 (AKAEQEWFCL…PFNDNALHFT (79 aa)). The segment at 144-149 (PQPHLE) is flexible linker. Residues 150–205 (VTHQPTNDALSALVKLGFERDQAARALALAMNALEGETVSSALLIRHSLKLLSPST) form a domain III region.

It belongs to the RuvA family. In terms of assembly, homotetramer. Forms an RuvA(8)-RuvB(12)-Holliday junction (HJ) complex. HJ DNA is sandwiched between 2 RuvA tetramers; dsDNA enters through RuvA and exits via RuvB. An RuvB hexamer assembles on each DNA strand where it exits the tetramer. Each RuvB hexamer is contacted by two RuvA subunits (via domain III) on 2 adjacent RuvB subunits; this complex drives branch migration. In the full resolvosome a probable DNA-RuvA(4)-RuvB(12)-RuvC(2) complex forms which resolves the HJ.

The protein localises to the cytoplasm. Functionally, the RuvA-RuvB-RuvC complex processes Holliday junction (HJ) DNA during genetic recombination and DNA repair, while the RuvA-RuvB complex plays an important role in the rescue of blocked DNA replication forks via replication fork reversal (RFR). RuvA specifically binds to HJ cruciform DNA, conferring on it an open structure. The RuvB hexamer acts as an ATP-dependent pump, pulling dsDNA into and through the RuvAB complex. HJ branch migration allows RuvC to scan DNA until it finds its consensus sequence, where it cleaves and resolves the cruciform DNA. The polypeptide is Holliday junction branch migration complex subunit RuvA (Bartonella quintana (strain Toulouse) (Rochalimaea quintana)).